The sequence spans 754 residues: tRNA(Met) cytidine acetyltransferase TmcA (754 aa).

Residues 181-202 (GISFDAAPPRVPTEKDRRSPRR) are disordered. A compositionally biased stretch (basic and acidic residues) spans 192–202 (PTEKDRRSPRR). ATP-binding positions include Gln212, 236–245 (GRGKSSAAGL), and Arg383. The 186-residue stretch at 418–603 (VSYRALSPDD…YSALMTRPLS (186 aa)) folds into the N-acetyltransferase domain. Acetyl-CoA is bound by residues 529–531 (IAT), 536–542 (RSSGLGS), and Glu568.

Belongs to the RNA cytidine acetyltransferase family. TmcA subfamily.

The protein localises to the cytoplasm. The catalysed reaction is cytidine(34) in elongator tRNA(Met) + acetyl-CoA + ATP + H2O = N(4)-acetylcytidine(34) in elongator tRNA(Met) + ADP + phosphate + CoA + H(+). In terms of biological role, catalyzes the formation of N(4)-acetylcytidine (ac(4)C) at the wobble position of tRNA(Met), by using acetyl-CoA as an acetyl donor and ATP (or GTP). The protein is tRNA(Met) cytidine acetyltransferase TmcA of Haloferax volcanii (strain ATCC 29605 / DSM 3757 / JCM 8879 / NBRC 14742 / NCIMB 2012 / VKM B-1768 / DS2) (Halobacterium volcanii).